The chain runs to 180 residues: NADH-quinone oxidoreductase subunit I (180 aa).

2 consecutive 4Fe-4S ferredoxin-type domains span residues 50–80 (LTRNIDGGERCVACNLCAVVCPVDCISLQKS) and 90–119 (KFFRINFSRCIFCGLCEEACPTAAIQLMPD). [4Fe-4S] cluster contacts are provided by Cys60, Cys63, Cys66, Cys70, Cys99, Cys102, Cys105, and Cys109.

Belongs to the complex I 23 kDa subunit family. In terms of assembly, NDH-1 is composed of 13 different subunits. Subunits NuoA, H, J, K, L, M, N constitute the membrane sector of the complex. It depends on [4Fe-4S] cluster as a cofactor.

Its subcellular location is the cell membrane. The enzyme catalyses a quinone + NADH + 5 H(+)(in) = a quinol + NAD(+) + 4 H(+)(out). Its function is as follows. NDH-1 shuttles electrons from NADH, via FMN and iron-sulfur (Fe-S) centers, to quinones in the respiratory chain. The immediate electron acceptor for the enzyme in this species is believed to be ubiquinone. Couples the redox reaction to proton translocation (for every two electrons transferred, four hydrogen ions are translocated across the cytoplasmic membrane), and thus conserves the redox energy in a proton gradient. The chain is NADH-quinone oxidoreductase subunit I from Buchnera aphidicola subsp. Schizaphis graminum (strain Sg).